A 62-amino-acid chain; its full sequence is Large ribosomal subunit protein bL35 (62 aa).

A disordered region spans residues 31 to 62 (HLAQNKTTKQKRQSRKSAQMHSSDLKRFKALI). Residues 53-62 (SDLKRFKALI) show a composition bias toward basic and acidic residues.

The protein belongs to the bacterial ribosomal protein bL35 family.

The protein is Large ribosomal subunit protein bL35 of Mycoplasmopsis agalactiae (strain NCTC 10123 / CIP 59.7 / PG2) (Mycoplasma agalactiae).